A 450-amino-acid chain; its full sequence is MFS-type transporter avaK (450 aa).

Transmembrane regions (helical) follow at residues 18 to 38, 100 to 120, 148 to 168, 171 to 191, 244 to 264, 280 to 300, 329 to 349, and 408 to 428; these read VMALNSLLILFTNFAIFLSMP, RVVCIYSDVLPLSLVWLSGLL, AVALLRLHSVFIVAKIFAAPA, ALVALTSAWTPFLISLAMLFV, APIIIVNLVASITKSSNHFLL, LVLVIREASSLLTYLVLMPAA, FGFFSIALAGTPVVYVLALAF, and GWLGIPYIAAGLFFITVLVAV.

It belongs to the major facilitator superfamily.

It localises to the membrane. The protein operates within secondary metabolite biosynthesis. Its function is as follows. MFS-type transporter; part of the cluster that mediates the biosynthesis of a highly modified cyclo-arginine-tryptophan dipeptide (cRW). This is MFS-type transporter avaK from Aspergillus versicolor.